Reading from the N-terminus, the 447-residue chain is N-succinylarginine dihydrolase (447 aa).

Residues 19–28 (AGLSFGNEAS), Asn-110, and 137–138 (HR) contribute to the substrate site. Glu-174 is an active-site residue. Substrate is bound at residue Arg-212. His-248 is an active-site residue. Substrate contacts are provided by Asp-250 and Asn-359. Cys-365 acts as the Nucleophile in catalysis.

This sequence belongs to the succinylarginine dihydrolase family. As to quaternary structure, homodimer.

It carries out the reaction N(2)-succinyl-L-arginine + 2 H2O + 2 H(+) = N(2)-succinyl-L-ornithine + 2 NH4(+) + CO2. Its pathway is amino-acid degradation; L-arginine degradation via AST pathway; L-glutamate and succinate from L-arginine: step 2/5. Functionally, catalyzes the hydrolysis of N(2)-succinylarginine into N(2)-succinylornithine, ammonia and CO(2). The polypeptide is N-succinylarginine dihydrolase (Escherichia fergusonii (strain ATCC 35469 / DSM 13698 / CCUG 18766 / IAM 14443 / JCM 21226 / LMG 7866 / NBRC 102419 / NCTC 12128 / CDC 0568-73)).